A 173-amino-acid polypeptide reads, in one-letter code: Endoribonuclease YbeY (173 aa).

Histidine 120, histidine 124, and histidine 130 together coordinate Zn(2+).

The protein belongs to the endoribonuclease YbeY family. Zn(2+) serves as cofactor.

The protein resides in the cytoplasm. Single strand-specific metallo-endoribonuclease involved in late-stage 70S ribosome quality control and in maturation of the 3' terminus of the 16S rRNA. The polypeptide is Endoribonuclease YbeY (Kineococcus radiotolerans (strain ATCC BAA-149 / DSM 14245 / SRS30216)).